Consider the following 1428-residue polypeptide: DNA topoisomerase 2 (1428 aa).

ATP-binding positions include Asn70, Asn99, 127-129 (SSN), and 140-147 (GRNGYGAK). Positions 333-336 (KKKK) are interaction with DNA. Position 365-367 (365-367 (QTK)) interacts with ATP. Residues 443-557 (CTLVLTEGDS…GLLDIQGFLL (115 aa)) form the Toprim domain. Mg(2+) contacts are provided by Glu449, Asp526, and Asp528. One can recognise a Topo IIA-type catalytic domain in the interval 692–1159 (IPNVLDGFKP…SAKDIWNTDL (468 aa)). Tyr782 functions as the O-(5'-phospho-DNA)-tyrosine intermediate in the catalytic mechanism. Positions 965–974 (KLISPISLMN) are interaction with DNA. 4 disordered regions span residues 1083-1102 (KGATSDEEDEESSHEDTENV), 1176-1217 (ARGG…RKGK), 1240-1288 (KAPT…ELSK), and 1303-1428 (MGST…NEED). Thr1086 is subject to Phosphothreonine; by CK2. The residue at position 1087 (Ser1087) is a Phosphoserine; by CK2. Basic residues predominate over residues 1207 to 1217 (KNKKSTARKGK). Phosphoserine is present on Ser1252. The residue at position 1258 (Thr1258) is a Phosphothreonine; by CK2. Phosphoserine; by CK2 is present on residues Ser1266, Ser1269, and Ser1272. Positions 1275-1286 (DIKKEDKDEGEL) are enriched in basic and acidic residues. Residues 1332 to 1347 (TAVKPKLAKKPVRKQQ) show a composition bias toward basic residues. Residues Ser1353, Ser1356, Ser1408, and Ser1423 each carry the phosphoserine; by CK2 modification. A compositionally biased stretch (acidic residues) spans 1403–1428 (ELSDDSFIEDDEEENQGSDVSFNEED).

Belongs to the type II topoisomerase family. Homodimer. The cofactor is Mg(2+). Mn(2+) is required as a cofactor. Ca(2+) serves as cofactor. Post-translationally, phosphorylation enhances the activity. Stimulates decatenation activity.

It is found in the nucleus. It catalyses the reaction ATP-dependent breakage, passage and rejoining of double-stranded DNA.. Functionally, control of topological states of DNA by transient breakage and subsequent rejoining of DNA strands. Topoisomerase II makes double-strand breaks. Essential during mitosis and meiosis for proper segregation of daughter chromosomes. This chain is DNA topoisomerase 2 (TOP2), found in Saccharomyces cerevisiae (strain ATCC 204508 / S288c) (Baker's yeast).